A 131-amino-acid polypeptide reads, in one-letter code: Holin-like protein CidA (131 aa).

4 helical membrane-spanning segments follow: residues 4-24 (VQLIIKLLLQLGIIIVITYIG), 30-50 (IFHLPLAGSIVGLFLFYLLLQ), 65-85 (FLLKTMVFFFIPSVVGIMDVA), and 88-108 (ITLNYILFFAVIIIGTCIVAL).

Belongs to the CidA/LrgA family. CidA subfamily.

Its subcellular location is the cell membrane. Its function is as follows. Increases the activity of extracellular murein hydrolases possibly by mediating their export via hole formation. Inhibited by the antiholin-like proteins LrgAB. In an unstressed cell, the LrgAB products probably inhibit the function of the CidAB proteins. When a cell is stressed by the addition of antibiotics or by other factors in the environment, the CidAB proteins possibly oligomerize within the bacterial cell membrane, creating lesions that disrupt the proton motive force, which in turn results in loss of cell viability. These lesions are also hypothesized to regulate the subsequent cell lysis by either allowing the murein hydrolases access to the cell wall substrate and/or regulating their activity by a possible change in the cell wall pH that results from loss of membrane potential. The polypeptide is Holin-like protein CidA (Staphylococcus aureus (strain Mu3 / ATCC 700698)).